The following is a 179-amino-acid chain: Adenine phosphoribosyltransferase (179 aa).

It belongs to the purine/pyrimidine phosphoribosyltransferase family. As to quaternary structure, homodimer.

Its subcellular location is the cytoplasm. It catalyses the reaction AMP + diphosphate = 5-phospho-alpha-D-ribose 1-diphosphate + adenine. It functions in the pathway purine metabolism; AMP biosynthesis via salvage pathway; AMP from adenine: step 1/1. In terms of biological role, catalyzes a salvage reaction resulting in the formation of AMP, that is energically less costly than de novo synthesis. This is Adenine phosphoribosyltransferase from Azorhizobium caulinodans (strain ATCC 43989 / DSM 5975 / JCM 20966 / LMG 6465 / NBRC 14845 / NCIMB 13405 / ORS 571).